The following is a 121-amino-acid chain: Large ribosomal subunit protein uL22 (121 aa).

This sequence belongs to the universal ribosomal protein uL22 family. In terms of assembly, part of the 50S ribosomal subunit.

In terms of biological role, this protein binds specifically to 23S rRNA; its binding is stimulated by other ribosomal proteins, e.g. L4, L17, and L20. It is important during the early stages of 50S assembly. It makes multiple contacts with different domains of the 23S rRNA in the assembled 50S subunit and ribosome. Its function is as follows. The globular domain of the protein is located near the polypeptide exit tunnel on the outside of the subunit, while an extended beta-hairpin is found that lines the wall of the exit tunnel in the center of the 70S ribosome. This chain is Large ribosomal subunit protein uL22, found in Salinibacter ruber (strain DSM 13855 / M31).